Here is a 267-residue protein sequence, read N- to C-terminus: Glutamate racemase (267 aa).

Substrate is bound by residues 13–14 and 45–46; these read DS and YS. Cysteine 77 acts as the Proton donor/acceptor in catalysis. Position 78–79 (78–79) interacts with substrate; sequence NT. Cysteine 188 functions as the Proton donor/acceptor in the catalytic mechanism. A substrate-binding site is contributed by 189-190; that stretch reads TH.

It belongs to the aspartate/glutamate racemases family.

It carries out the reaction L-glutamate = D-glutamate. It functions in the pathway cell wall biogenesis; peptidoglycan biosynthesis. Provides the (R)-glutamate required for cell wall biosynthesis. The protein is Glutamate racemase of Histophilus somni (strain 129Pt) (Haemophilus somnus).